A 174-amino-acid chain; its full sequence is MQDFVPNSSYTREELIACGNGELFGPGNAQLPVPNMLMLDRIAHISTTGGEYGKGEIIAELDIHKDLWFFGCHFPGDPVMPGCLGLDAMWQLVGFFLAWKGNPGRGRALGSGEVKFTGQILPTAKQVTYHIHLKRVIERKLIMGIADGRVAVDGKEIYFAKDLRVGLFSNTDTF.

Residue His73 is part of the active site.

This sequence belongs to the thioester dehydratase family. FabA subfamily. As to quaternary structure, homodimer.

Its subcellular location is the cytoplasm. The catalysed reaction is a (3R)-hydroxyacyl-[ACP] = a (2E)-enoyl-[ACP] + H2O. It carries out the reaction (3R)-hydroxydecanoyl-[ACP] = (2E)-decenoyl-[ACP] + H2O. The enzyme catalyses (2E)-decenoyl-[ACP] = (3Z)-decenoyl-[ACP]. The protein operates within lipid metabolism; fatty acid biosynthesis. In terms of biological role, necessary for the introduction of cis unsaturation into fatty acids. Catalyzes the dehydration of (3R)-3-hydroxydecanoyl-ACP to E-(2)-decenoyl-ACP and then its isomerization to Z-(3)-decenoyl-ACP. Can catalyze the dehydratase reaction for beta-hydroxyacyl-ACPs with saturated chain lengths up to 16:0, being most active on intermediate chain length. The chain is 3-hydroxydecanoyl-[acyl-carrier-protein] dehydratase from Teredinibacter turnerae (strain ATCC 39867 / T7901).